Consider the following 426-residue polypeptide: Adenylosuccinate synthetase (426 aa).

Residues 12-18 (GDEGKGK) and 40-42 (GHT) contribute to the GTP site. Asp-13 (proton acceptor) is an active-site residue. Mg(2+) contacts are provided by Asp-13 and Gly-40. IMP contacts are provided by residues 13 to 16 (DEGK), 38 to 41 (NAGH), Thr-128, Arg-142, Gln-223, Thr-238, and Arg-302. The Proton donor role is filled by His-41. 298-304 (TTTGRAR) serves as a coordination point for substrate. Residues Arg-304, 330 to 332 (KLD), and 412 to 414 (SVG) contribute to the GTP site.

The protein belongs to the adenylosuccinate synthetase family. In terms of assembly, homodimer. Requires Mg(2+) as cofactor.

The protein resides in the cytoplasm. The enzyme catalyses IMP + L-aspartate + GTP = N(6)-(1,2-dicarboxyethyl)-AMP + GDP + phosphate + 2 H(+). It functions in the pathway purine metabolism; AMP biosynthesis via de novo pathway; AMP from IMP: step 1/2. Functionally, plays an important role in the de novo pathway of purine nucleotide biosynthesis. Catalyzes the first committed step in the biosynthesis of AMP from IMP. The chain is Adenylosuccinate synthetase from Thermoanaerobacter pseudethanolicus (strain ATCC 33223 / 39E) (Clostridium thermohydrosulfuricum).